The sequence spans 91 residues: Large ribosomal subunit protein uL23 (91 aa).

It belongs to the universal ribosomal protein uL23 family. Part of the 50S ribosomal subunit. Contacts protein L29, and trigger factor when it is bound to the ribosome.

Functionally, one of the early assembly proteins it binds 23S rRNA. One of the proteins that surrounds the polypeptide exit tunnel on the outside of the ribosome. Forms the main docking site for trigger factor binding to the ribosome. This chain is Large ribosomal subunit protein uL23, found in Staphylococcus haemolyticus (strain JCSC1435).